Consider the following 274-residue polypeptide: Urease accessory protein UreD (274 aa).

This sequence belongs to the UreD family. In terms of assembly, ureD, UreF and UreG form a complex that acts as a GTP-hydrolysis-dependent molecular chaperone, activating the urease apoprotein by helping to assemble the nickel containing metallocenter of UreC. The UreE protein probably delivers the nickel.

It localises to the cytoplasm. Its function is as follows. Required for maturation of urease via the functional incorporation of the urease nickel metallocenter. The chain is Urease accessory protein UreD from Lachnoclostridium phytofermentans (strain ATCC 700394 / DSM 18823 / ISDg) (Clostridium phytofermentans).